Consider the following 507-residue polypeptide: Maturase K (507 aa).

This sequence belongs to the intron maturase 2 family. MatK subfamily.

It is found in the plastid. It localises to the chloroplast. In terms of biological role, usually encoded in the trnK tRNA gene intron. Probably assists in splicing its own and other chloroplast group II introns. This chain is Maturase K, found in Fagopyrum esculentum (Common buckwheat).